A 181-amino-acid chain; its full sequence is Photosystem I assembly protein Ycf4 (181 aa).

Transmembrane regions (helical) follow at residues 19–41 (YAWC…GSYF) and 61–83 (IVMM…SIFT).

It belongs to the Ycf4 family.

The protein resides in the plastid. Its subcellular location is the chloroplast thylakoid membrane. Functionally, seems to be required for the assembly of the photosystem I complex. The chain is Photosystem I assembly protein Ycf4 from Guillardia theta (Cryptophyte).